We begin with the raw amino-acid sequence, 119 residues long: Large ribosomal subunit protein bL20 (119 aa).

It belongs to the bacterial ribosomal protein bL20 family.

Its function is as follows. Binds directly to 23S ribosomal RNA and is necessary for the in vitro assembly process of the 50S ribosomal subunit. It is not involved in the protein synthesizing functions of that subunit. The protein is Large ribosomal subunit protein bL20 of Burkholderia ambifaria (strain MC40-6).